Consider the following 33-residue polypeptide: Photosystem II reaction center protein Psb30 (33 aa).

Residues 5–25 form a helical membrane-spanning segment; that stretch reads VIAQLIALALIVGSGPLVIAL.

It belongs to the Psb30/Ycf12 family. PSII is composed of 1 copy each of membrane proteins PsbA, PsbB, PsbC, PsbD, PsbE, PsbF, PsbH, PsbI, PsbJ, PsbK, PsbL, PsbM, PsbT, PsbX, PsbY, PsbZ, Psb30/Ycf12, peripheral proteins of the oxygen-evolving complex and a large number of cofactors. It forms dimeric complexes.

Its subcellular location is the plastid. It localises to the chloroplast thylakoid membrane. Functionally, a core subunit of photosystem II (PSII), probably helps stabilize the reaction center. This is Photosystem II reaction center protein Psb30 from Physcomitrium patens (Spreading-leaved earth moss).